We begin with the raw amino-acid sequence, 98 residues long: Large ribosomal subunit protein bL27 (98 aa).

The segment at 1–22 (MAHKKGTGSTRNGRDSNAQRLG) is disordered. Positions 7 to 19 (TGSTRNGRDSNAQ) are enriched in polar residues.

It belongs to the bacterial ribosomal protein bL27 family.

The sequence is that of Large ribosomal subunit protein bL27 from Nostoc punctiforme (strain ATCC 29133 / PCC 73102).